A 597-amino-acid chain; its full sequence is Blastula protease 10 (597 aa).

Positions 1-16 (MKLILFLSGLVSLVLC) are cleaved as a signal peptide. Positions 17 to 93 (TLAAPTGDQK…DEMTGRKKRK (77 aa)) are cleaved as a propeptide — activation peptide. The interval 24–67 (DQKEIHTETPPPKKPSETTTPGALKTPQPEPKDEEPTPGAFQGD) is disordered. Residues 93 to 294 (KATIYESQRW…ELANLIYECD (202 aa)) form the Peptidase M12A domain. Intrachain disulfides connect C134–C293, C162–C182, C299–C315, C305–C317, C319–C328, C339–C365, C392–C412, C484–C510, and C537–C557. Residue H190 coordinates Zn(2+). E191 is a catalytic residue. Zn(2+)-binding residues include H194 and H200. The EGF-like domain maps to 295-329 (DIEDCAGANECLNGGYHDTECNCVCPSGYNGDLCE). 2 consecutive CUB domains span residues 339–449 (CSER…YRIV) and 484–595 (CGGS…YRAI).

Zn(2+) is required as a cofactor.

It localises to the cytoplasm. Its subcellular location is the perinuclear region. It is found in the cell cortex. The protein localises to the secreted. The protein resides in the extracellular space. In terms of biological role, could be involved in the differentiation of ectodermal lineages and subsequent patterning of the embryo. This is Blastula protease 10 (BP10) from Paracentrotus lividus (Common sea urchin).